Consider the following 117-residue polypeptide: Large ribosomal subunit protein bL20c (117 aa).

Belongs to the bacterial ribosomal protein bL20 family.

The protein localises to the plastid. It localises to the chloroplast. In terms of biological role, binds directly to 23S ribosomal RNA and is necessary for the in vitro assembly process of the 50S ribosomal subunit. It is not involved in the protein synthesizing functions of that subunit. The chain is Large ribosomal subunit protein bL20c (rpl20) from Arabidopsis thaliana (Mouse-ear cress).